A 368-amino-acid polypeptide reads, in one-letter code: 2-aminoethylphosphonate--pyruvate transaminase (368 aa).

An N6-(pyridoxal phosphate)lysine modification is found at Lys-192.

Belongs to the class-V pyridoxal-phosphate-dependent aminotransferase family. PhnW subfamily. Homodimer. Pyridoxal 5'-phosphate serves as cofactor.

It catalyses the reaction (2-aminoethyl)phosphonate + pyruvate = phosphonoacetaldehyde + L-alanine. Involved in phosphonate degradation. This Pseudomonas putida (strain ATCC 700007 / DSM 6899 / JCM 31910 / BCRC 17059 / LMG 24140 / F1) protein is 2-aminoethylphosphonate--pyruvate transaminase.